Here is a 210-residue protein sequence, read N- to C-terminus: 2-hydroxy-3-keto-5-methylthiopentenyl-1-phosphate phosphatase (210 aa).

It belongs to the HAD-like hydrolase superfamily. MtnX family.

It catalyses the reaction 2-hydroxy-5-methylsulfanyl-3-oxopent-1-enyl phosphate + H2O = 1,2-dihydroxy-5-(methylsulfanyl)pent-1-en-3-one + phosphate. The protein operates within amino-acid biosynthesis; L-methionine biosynthesis via salvage pathway; L-methionine from S-methyl-5-thio-alpha-D-ribose 1-phosphate: step 4/6. Dephosphorylates 2-hydroxy-3-keto-5-methylthiopentenyl-1-phosphate (HK-MTPenyl-1-P) yielding 1,2-dihydroxy-3-keto-5-methylthiopentene (DHK-MTPene). The protein is 2-hydroxy-3-keto-5-methylthiopentenyl-1-phosphate phosphatase of Microcystis aeruginosa.